Consider the following 280-residue polypeptide: MSFRSSSSYSVQSKNVSGGGGFGSSYGGGSSSSFGGGYGAGFGGGYGAGFGGGASSGFSSSSSGGFGAAAASSSFSSFGGNDKQTMQNLNDRLASYLEKVRALEAANADLELKIREWYEKQKGSGIGAASKDFSKYFEIISDLRNKILFATIDNPRVVLQIDDAKLAADDFRLKFENELALRQSVEADINGLRRVLDELTLARGDLEMQIESLTEELAYLKKNHEEEMSIAKGSAAGQVTVEMDAAPGVDLNKILSDMRADYETLAEKNRRDAELWFNQK.

Residues 1–81 (MSFRSSSSYS…SSSFSSFGGN (81 aa)) form a head region. The tract at residues 82-117 (DKQTMQNLNDRLASYLEKVRALEAANADLELKIREW) is coil 1A. An IF rod domain is found at 82-280 (DKQTMQNLND…RDAELWFNQK (199 aa)). The segment at 118–139 (YEKQKGSGIGAASKDFSKYFEI) is linker 1. Residues 140-231 (ISDLRNKILF…KNHEEEMSIA (92 aa)) are coil 1B. Positions 232–254 (KGSAAGQVTVEMDAAPGVDLNKI) are linker 12. The segment at 255–280 (LSDMRADYETLAEKNRRDAELWFNQK) is coil 2.

It belongs to the intermediate filament family. In terms of assembly, heterotetramer of two type I and two type II keratins.

The protein is Keratin, type I cytoskeletal 47 kDa (xk81b1) of Xenopus laevis (African clawed frog).